The primary structure comprises 258 residues: Indole-3-glycerol phosphate synthase (258 aa).

It belongs to the TrpC family.

The enzyme catalyses 1-(2-carboxyphenylamino)-1-deoxy-D-ribulose 5-phosphate + H(+) = (1S,2R)-1-C-(indol-3-yl)glycerol 3-phosphate + CO2 + H2O. It participates in amino-acid biosynthesis; L-tryptophan biosynthesis; L-tryptophan from chorismate: step 4/5. In Chlorobium limicola (strain DSM 245 / NBRC 103803 / 6330), this protein is Indole-3-glycerol phosphate synthase.